Here is a 1136-residue protein sequence, read N- to C-terminus: 3-O-alpha-D-galactosyl-alpha-L-arabinofuranosidase (1136 aa).

The first 36 residues, 1–36 (MGISRNRLVPGLVGLAASAAIVLPLGIGMPVSSATA), serve as a signal peptide directing secretion. Catalysis depends on Glu-194, which acts as the Proton donor. Residue Glu-321 is the Nucleophile of the active site. CBM6 domains are found at residues 521–656 (QAIE…LLLY) and 669–779 (VTYP…VTTA). The BIG2 domain occupies 987-1045 (KASLKVGETLSLNASVTPDSVADKTVQWTSSDEQVATVDEHGVVKGVKAGTVTITATSV). The interval 1049-1104 (SRSGSVEVTVAEDSEQKPSGGDGDNNGEQTGKPDGNTGGQTSDSDAGADSGNNQKH) is disordered. The segment covering 1087 to 1103 (GQTSDSDAGADSGNNQK) has biased composition (polar residues). The helical transmembrane segment at 1109 to 1129 (GAAVAAVAGVAVLLAGAGLLL) threads the bilayer.

It belongs to the glycosyl hydrolase 39 family.

It is found in the cell membrane. Its subcellular location is the secreted. The protein resides in the cell wall. It carries out the reaction Hydrolysis of alpha-D-Galp-(1-&gt;3)-L-Araf disaccharides from non-reducing terminals in branches of type II arabinogalactan attached to proteins.. Its function is as follows. Hydrolase involved in the degradation of the gum arabic arabinogalactan protein (AGP). Catalyzes the release of 3-O-alpha-D-galactopyranosyl-L-arabinose (alpha-D-Galp-(1-&gt;3)-L-Ara) from gum arabic AGP. Can also release 3-O-beta-L-arabinopyranosyl-L-arabinose (beta-L-Arap-(1-&gt;3)-L-Ara) from gum arabic AGP and larch AGP, but the alpha-D-Galp-(1-&gt;3)-L-Ara release activity is 594-fold higher than the beta-L-Arap-(1-&gt;3)-L-Ara release activity. Exhibits no reactivity toward p-nitrophenyl (pNP)-alpha-Araf or any other tested pNP substrate. Plays a crucial role in gum arabic AGP assimilation in B.longum. This chain is 3-O-alpha-D-galactosyl-alpha-L-arabinofuranosidase, found in Bifidobacterium longum subsp. longum.